The primary structure comprises 473 residues: ATP synthase subunit beta 2 (473 aa).

158–165 provides a ligand contact to ATP; that stretch reads GGAGVGKT.

This sequence belongs to the ATPase alpha/beta chains family. F-type ATPases have 2 components, CF(1) - the catalytic core - and CF(0) - the membrane proton channel. CF(1) has five subunits: alpha(3), beta(3), gamma(1), delta(1), epsilon(1). CF(0) has three main subunits: a(1), b(2) and c(9-12). The alpha and beta chains form an alternating ring which encloses part of the gamma chain. CF(1) is attached to CF(0) by a central stalk formed by the gamma and epsilon chains, while a peripheral stalk is formed by the delta and b chains.

It localises to the cell membrane. The enzyme catalyses ATP + H2O + 4 H(+)(in) = ADP + phosphate + 5 H(+)(out). Functionally, produces ATP from ADP in the presence of a proton gradient across the membrane. The catalytic sites are hosted primarily by the beta subunits. In Listeria welshimeri serovar 6b (strain ATCC 35897 / DSM 20650 / CCUG 15529 / CIP 8149 / NCTC 11857 / SLCC 5334 / V8), this protein is ATP synthase subunit beta 2.